The following is a 297-amino-acid chain: D-aminoacyl-tRNA deacylase (297 aa).

Belongs to the DtdA deacylase family. In terms of assembly, monomer. Requires Zn(2+) as cofactor.

The enzyme catalyses a D-aminoacyl-tRNA + H2O = a tRNA + a D-alpha-amino acid + H(+). It catalyses the reaction glycyl-tRNA(Ala) + H2O = tRNA(Ala) + glycine + H(+). D-aminoacyl-tRNA deacylase with broad substrate specificity. By recycling D-aminoacyl-tRNA to D-amino acids and free tRNA molecules, this enzyme counteracts the toxicity associated with the formation of D-aminoacyl-tRNA entities in vivo. This chain is D-aminoacyl-tRNA deacylase, found in Methanosarcina acetivorans (strain ATCC 35395 / DSM 2834 / JCM 12185 / C2A).